The primary structure comprises 445 residues: Sensor protein kinase CarS (445 aa).

Positions 1–24 (MRSIQRRLSVGLFAVLLVVGLVLA) are cleaved as a signal peptide. Residues 150–170 (FARVQWMGLGAGALALLLVLL) form a helical membrane-spanning segment. Positions 177-228 (RRSLRPLEEVRLQIAQLQQGQRSQLDNQAPEELEPLVEQINHLLAHTEETLK) constitute an HAMP domain. The Histidine kinase domain occupies 236-438 (NLGHALKTPL…RVSVELPLQK (203 aa)). Phosphohistidine; by autocatalysis is present on His-239.

It is found in the membrane. It catalyses the reaction ATP + protein L-histidine = ADP + protein N-phospho-L-histidine.. In terms of biological role, member of the two-component regulatory system CarS/CarR that regulates the expression of multiple genes involved in calcium signaling and homeostasis including CarO and CarP. May function as a membrane-associated protein kinase that phosphorylates CarR in response to environmental signals leading to activation of specific gene promoters. The protein is Sensor protein kinase CarS (carS) of Pseudomonas aeruginosa (strain ATCC 15692 / DSM 22644 / CIP 104116 / JCM 14847 / LMG 12228 / 1C / PRS 101 / PAO1).